Reading from the N-terminus, the 32-residue chain is Chaperone protein DnaK (32 aa).

Belongs to the heat shock protein 70 family.

Acts as a chaperone. This is Chaperone protein DnaK from Anabaena sp. (strain L31).